A 293-amino-acid chain; its full sequence is 4-hydroxy-tetrahydrodipicolinate synthase (293 aa).

Position 47 (threonine 47) interacts with pyruvate. Catalysis depends on tyrosine 136, which acts as the Proton donor/acceptor. Lysine 164 (schiff-base intermediate with substrate) is an active-site residue. Isoleucine 206 provides a ligand contact to pyruvate.

Belongs to the DapA family. Homotetramer; dimer of dimers.

It localises to the cytoplasm. It carries out the reaction L-aspartate 4-semialdehyde + pyruvate = (2S,4S)-4-hydroxy-2,3,4,5-tetrahydrodipicolinate + H2O + H(+). It participates in amino-acid biosynthesis; L-lysine biosynthesis via DAP pathway; (S)-tetrahydrodipicolinate from L-aspartate: step 3/4. Functionally, catalyzes the condensation of (S)-aspartate-beta-semialdehyde [(S)-ASA] and pyruvate to 4-hydroxy-tetrahydrodipicolinate (HTPA). The chain is 4-hydroxy-tetrahydrodipicolinate synthase from Listeria monocytogenes serotype 4a (strain HCC23).